We begin with the raw amino-acid sequence, 156 residues long: 6,7-dimethyl-8-ribityllumazine synthase (156 aa).

5-amino-6-(D-ribitylamino)uracil contacts are provided by residues phenylalanine 22, 56 to 58 (AFE), and 80 to 82 (AVV). (2S)-2-hydroxy-3-oxobutyl phosphate is bound at residue 85-86 (ET). The active-site Proton donor is histidine 88. Phenylalanine 113 is a binding site for 5-amino-6-(D-ribitylamino)uracil. Arginine 127 is a (2S)-2-hydroxy-3-oxobutyl phosphate binding site.

This sequence belongs to the DMRL synthase family.

It catalyses the reaction (2S)-2-hydroxy-3-oxobutyl phosphate + 5-amino-6-(D-ribitylamino)uracil = 6,7-dimethyl-8-(1-D-ribityl)lumazine + phosphate + 2 H2O + H(+). It participates in cofactor biosynthesis; riboflavin biosynthesis; riboflavin from 2-hydroxy-3-oxobutyl phosphate and 5-amino-6-(D-ribitylamino)uracil: step 1/2. In terms of biological role, catalyzes the formation of 6,7-dimethyl-8-ribityllumazine by condensation of 5-amino-6-(D-ribitylamino)uracil with 3,4-dihydroxy-2-butanone 4-phosphate. This is the penultimate step in the biosynthesis of riboflavin. In Pediococcus pentosaceus (strain ATCC 25745 / CCUG 21536 / LMG 10740 / 183-1w), this protein is 6,7-dimethyl-8-ribityllumazine synthase.